A 178-amino-acid polypeptide reads, in one-letter code: PEST proteolytic signal-containing nuclear protein (178 aa).

The segment covering methionine 1–glutamine 15 has biased composition (basic and acidic residues). Residues methionine 1–lysine 82 form a disordered region. Alanine 2 carries the post-translational modification N-acetylalanine. Positions serine 37–arginine 47 are enriched in low complexity. Serine 53 carries the post-translational modification Phosphoserine. Lysine 64 carries the N6-acetyllysine modification. Residues serine 77, serine 87, and serine 119 each carry the phosphoserine modification. Residues asparagine 134 to asparagine 158 form a disordered region. Threonine 139 carries the phosphothreonine modification. Over residues threonine 139 to asparagine 149 the composition is skewed to polar residues. Serine 147 is modified (phosphoserine). 2 positions are modified to N6-acetyllysine: lysine 150 and lysine 152.

In terms of assembly, interacts with UHRF2/NIRF. Ubiquitinated; mediated by UHRF2 and leading to its subsequent proteasomal degradation. In terms of processing, N-terminally acetylated in a HYPK-dependent manner by the NatA acetyltransferase complex which is composed of NAA10 and NAA15.

The protein resides in the nucleus. May be involved in cell cycle regulation. The chain is PEST proteolytic signal-containing nuclear protein (Pcnp) from Mus musculus (Mouse).